We begin with the raw amino-acid sequence, 200 residues long: Recombination protein RecR (200 aa).

The C4-type zinc finger occupies 58-75 (CPLCFTLKESKEADCHFC). A Toprim domain is found at 82–177 (QSLCIVASPK…NISRLALGLP (96 aa)).

This sequence belongs to the RecR family.

Its function is as follows. May play a role in DNA repair. It seems to be involved in an RecBC-independent recombinational process of DNA repair. It may act with RecF and RecO. In Chlamydia pneumoniae (Chlamydophila pneumoniae), this protein is Recombination protein RecR.